The chain runs to 582 residues: Formate--tetrahydrofolate ligase (582 aa).

65-72 (TPLGEGKT) contributes to the ATP binding site.

The protein belongs to the formate--tetrahydrofolate ligase family.

It catalyses the reaction (6S)-5,6,7,8-tetrahydrofolate + formate + ATP = (6R)-10-formyltetrahydrofolate + ADP + phosphate. Its pathway is one-carbon metabolism; tetrahydrofolate interconversion. This chain is Formate--tetrahydrofolate ligase, found in Vibrio vulnificus (strain CMCP6).